Here is a 260-residue protein sequence, read N- to C-terminus: Pyridoxine 5'-phosphate synthase (260 aa).

2 residues coordinate 3-amino-2-oxopropyl phosphate: Asn10 and Arg21. The active-site Proton acceptor is His46. 2 residues coordinate 1-deoxy-D-xylulose 5-phosphate: Arg48 and His53. Glu76 serves as the catalytic Proton acceptor. A 1-deoxy-D-xylulose 5-phosphate-binding site is contributed by Thr113. The active-site Proton donor is the His204. 3-amino-2-oxopropyl phosphate-binding positions include Asp205 and 227–228 (GH).

The protein belongs to the PNP synthase family. As to quaternary structure, homooctamer; tetramer of dimers.

It localises to the cytoplasm. The catalysed reaction is 3-amino-2-oxopropyl phosphate + 1-deoxy-D-xylulose 5-phosphate = pyridoxine 5'-phosphate + phosphate + 2 H2O + H(+). It functions in the pathway cofactor biosynthesis; pyridoxine 5'-phosphate biosynthesis; pyridoxine 5'-phosphate from D-erythrose 4-phosphate: step 5/5. Functionally, catalyzes the complicated ring closure reaction between the two acyclic compounds 1-deoxy-D-xylulose-5-phosphate (DXP) and 3-amino-2-oxopropyl phosphate (1-amino-acetone-3-phosphate or AAP) to form pyridoxine 5'-phosphate (PNP) and inorganic phosphate. In Xylella fastidiosa (strain M12), this protein is Pyridoxine 5'-phosphate synthase.